Consider the following 27-residue polypeptide: KDGYLMEPNGCKLGCLTRPAKYCWXEE.

The LCN-type CS-alpha/beta domain occupies 1-27; it reads KDGYLMEPNGCKLGCLTRPAKYCWXEE.

It belongs to the long (4 C-C) scorpion toxin superfamily. Sodium channel inhibitor family. Beta subfamily. As to expression, expressed by the venom gland.

Its subcellular location is the secreted. Beta toxins bind voltage-independently at site-4 of sodium channels (Nav) and shift the voltage of activation toward more negative potentials thereby affecting sodium channel activation and promoting spontaneous and repetitive firing. This toxin is active against mammals and also affects neuromuscular preparations of frog. This is Toxin TdII-4 from Tityus discrepans (Venezuelan scorpion).